A 30-amino-acid polypeptide reads, in one-letter code: Beta-endorphin-2 (30 aa).

The residue at position 1 (Tyr-1) is an N-acetyltyrosine.

It belongs to the POMC family.

It localises to the secreted. This chain is Beta-endorphin-2, found in Oncorhynchus keta (Chum salmon).